The sequence spans 265 residues: Orotidine 5'-phosphate decarboxylase (265 aa).

Substrate contacts are provided by residues Asp37, Lys59–His61, Asp91–Thr100, Tyr217, and Arg236. Lys93 functions as the Proton donor in the catalytic mechanism.

This sequence belongs to the OMP decarboxylase family.

The catalysed reaction is orotidine 5'-phosphate + H(+) = UMP + CO2. It functions in the pathway pyrimidine metabolism; UMP biosynthesis via de novo pathway; UMP from orotate: step 2/2. This is Orotidine 5'-phosphate decarboxylase (URA3) from Saccharomycopsis fibuligera (Yeast).